The chain runs to 345 residues: Anthranilate phosphoribosyltransferase (345 aa).

Residues G75, 78-79, S83, 85-88, 103-111, and G115 each bind 5-phospho-alpha-D-ribose 1-diphosphate; these read GD, NIST, and KHGNRAASS. Anthranilate is bound at residue G75. Mg(2+) is bound at residue S87. N106 contacts anthranilate. R161 provides a ligand contact to anthranilate. Residues D219 and E220 each coordinate Mg(2+).

This sequence belongs to the anthranilate phosphoribosyltransferase family. Homodimer. Mg(2+) is required as a cofactor.

It carries out the reaction N-(5-phospho-beta-D-ribosyl)anthranilate + diphosphate = 5-phospho-alpha-D-ribose 1-diphosphate + anthranilate. The protein operates within amino-acid biosynthesis; L-tryptophan biosynthesis; L-tryptophan from chorismate: step 2/5. Its function is as follows. Catalyzes the transfer of the phosphoribosyl group of 5-phosphorylribose-1-pyrophosphate (PRPP) to anthranilate to yield N-(5'-phosphoribosyl)-anthranilate (PRA). The sequence is that of Anthranilate phosphoribosyltransferase from Nocardia farcinica (strain IFM 10152).